The primary structure comprises 360 residues: UDP-N-acetylglucosamine--N-acetylmuramyl-(pentapeptide) pyrophosphoryl-undecaprenol N-acetylglucosamine transferase (360 aa).

UDP-N-acetyl-alpha-D-glucosamine contacts are provided by residues 12-14 (TAG), serine 198, and glutamine 289.

Belongs to the glycosyltransferase 28 family. MurG subfamily.

It is found in the cell membrane. It catalyses the reaction Mur2Ac(oyl-L-Ala-gamma-D-Glu-L-Lys-D-Ala-D-Ala)-di-trans,octa-cis-undecaprenyl diphosphate + UDP-N-acetyl-alpha-D-glucosamine = beta-D-GlcNAc-(1-&gt;4)-Mur2Ac(oyl-L-Ala-gamma-D-Glu-L-Lys-D-Ala-D-Ala)-di-trans,octa-cis-undecaprenyl diphosphate + UDP + H(+). It participates in cell wall biogenesis; peptidoglycan biosynthesis. In terms of biological role, cell wall formation. Catalyzes the transfer of a GlcNAc subunit on undecaprenyl-pyrophosphoryl-MurNAc-pentapeptide (lipid intermediate I) to form undecaprenyl-pyrophosphoryl-MurNAc-(pentapeptide)GlcNAc (lipid intermediate II). The sequence is that of UDP-N-acetylglucosamine--N-acetylmuramyl-(pentapeptide) pyrophosphoryl-undecaprenol N-acetylglucosamine transferase from Streptococcus equi subsp. zooepidemicus (strain H70).